The primary structure comprises 437 residues: tRNA pseudouridine synthase Pus10 (437 aa).

In terms of domain architecture, THUMP spans 76 to 198; that stretch reads VARDVVEHLS…GGGVDIQVNS (123 aa). Catalysis depends on aspartate 253, which acts as the Nucleophile. 2 residues coordinate substrate: tyrosine 321 and tyrosine 394.

This sequence belongs to the pseudouridine synthase Pus10 family.

The catalysed reaction is uridine(54) in tRNA = pseudouridine(54) in tRNA. It catalyses the reaction uridine(55) in tRNA = pseudouridine(55) in tRNA. Responsible for synthesis of pseudouridine from uracil-54 and uracil-55 in the psi GC loop of transfer RNAs. The sequence is that of tRNA pseudouridine synthase Pus10 from Aeropyrum pernix (strain ATCC 700893 / DSM 11879 / JCM 9820 / NBRC 100138 / K1).